The primary structure comprises 215 residues: Deoxyribose-phosphate aldolase (215 aa).

The active-site Proton donor/acceptor is the aspartate 90. The active-site Schiff-base intermediate with acetaldehyde is the lysine 152. The active-site Proton donor/acceptor is lysine 181.

This sequence belongs to the DeoC/FbaB aldolase family. DeoC type 1 subfamily.

The protein resides in the cytoplasm. It catalyses the reaction 2-deoxy-D-ribose 5-phosphate = D-glyceraldehyde 3-phosphate + acetaldehyde. It functions in the pathway carbohydrate degradation; 2-deoxy-D-ribose 1-phosphate degradation; D-glyceraldehyde 3-phosphate and acetaldehyde from 2-deoxy-alpha-D-ribose 1-phosphate: step 2/2. Functionally, catalyzes a reversible aldol reaction between acetaldehyde and D-glyceraldehyde 3-phosphate to generate 2-deoxy-D-ribose 5-phosphate. The chain is Deoxyribose-phosphate aldolase from Ureaplasma parvum serovar 3 (strain ATCC 27815 / 27 / NCTC 11736).